A 101-amino-acid polypeptide reads, in one-letter code: Small ribosomal subunit protein uS14 (101 aa).

It belongs to the universal ribosomal protein uS14 family. In terms of assembly, part of the 30S ribosomal subunit. Contacts proteins S3 and S10.

Its function is as follows. Binds 16S rRNA, required for the assembly of 30S particles and may also be responsible for determining the conformation of the 16S rRNA at the A site. The polypeptide is Small ribosomal subunit protein uS14 (Protochlamydia amoebophila (strain UWE25)).